The following is a 396-amino-acid chain: NADH-quinone oxidoreductase subunit D (396 aa).

The protein belongs to the complex I 49 kDa subunit family. As to quaternary structure, NDH-1 is composed of 14 different subunits. Subunits NuoB, C, D, E, F, and G constitute the peripheral sector of the complex.

It localises to the cell inner membrane. It carries out the reaction a quinone + NADH + 5 H(+)(in) = a quinol + NAD(+) + 4 H(+)(out). Functionally, NDH-1 shuttles electrons from NADH, via FMN and iron-sulfur (Fe-S) centers, to quinones in the respiratory chain. The immediate electron acceptor for the enzyme in this species is believed to be ubiquinone. Couples the redox reaction to proton translocation (for every two electrons transferred, four hydrogen ions are translocated across the cytoplasmic membrane), and thus conserves the redox energy in a proton gradient. In Bartonella tribocorum (strain CIP 105476 / IBS 506), this protein is NADH-quinone oxidoreductase subunit D.